A 1052-amino-acid chain; its full sequence is Multidrug resistance protein MdtB (1052 aa).

The next 11 membrane-spanning stretches (helical) occupy residues 15–37, 345–362, 367–389, 396–418, 438–460, 472–494, 535–557, 867–889, 909–931, 968–990, and 1000–1022; these read LFIL…GIIG, FELL…YLFL, ATII…MYFL, LTLM…VIEN, GEIG…PLLF, FAVT…TPMM, HPWL…YLLI, LWLI…ESFI, LMLT…IGIV, ILMT…GVGA, and MVGG…YLLF. Residues 1032–1052 are disordered; it reads KNRHRDEDIDSSELLNGQEPQ.

Belongs to the resistance-nodulation-cell division (RND) (TC 2.A.6) family. MdtB subfamily. As to quaternary structure, part of a tripartite efflux system composed of MdtA, MdtB and MdtC. MdtB forms a heteromultimer with MdtC.

Its subcellular location is the cell inner membrane. This Yersinia pseudotuberculosis serotype I (strain IP32953) protein is Multidrug resistance protein MdtB.